The sequence spans 285 residues: Ribosomal RNA small subunit methyltransferase A (285 aa).

Positions 21, 23, 48, 69, 94, and 127 each coordinate S-adenosyl-L-methionine.

This sequence belongs to the class I-like SAM-binding methyltransferase superfamily. rRNA adenine N(6)-methyltransferase family. RsmA subfamily.

It localises to the cytoplasm. It carries out the reaction adenosine(1518)/adenosine(1519) in 16S rRNA + 4 S-adenosyl-L-methionine = N(6)-dimethyladenosine(1518)/N(6)-dimethyladenosine(1519) in 16S rRNA + 4 S-adenosyl-L-homocysteine + 4 H(+). Its function is as follows. Specifically dimethylates two adjacent adenosines (A1518 and A1519) in the loop of a conserved hairpin near the 3'-end of 16S rRNA in the 30S particle. May play a critical role in biogenesis of 30S subunits. The polypeptide is Ribosomal RNA small subunit methyltransferase A (Koribacter versatilis (strain Ellin345)).